Reading from the N-terminus, the 349-residue chain is Protein RecA (349 aa).

An ATP-binding site is contributed by 65–72 (GPESSGKT). The interval 329 to 349 (FDGDVDENENEDDSPKTLFDE) is disordered. Residues 331–340 (GDVDENENED) show a composition bias toward acidic residues.

It belongs to the RecA family.

It localises to the cytoplasm. Its function is as follows. Can catalyze the hydrolysis of ATP in the presence of single-stranded DNA, the ATP-dependent uptake of single-stranded DNA by duplex DNA, and the ATP-dependent hybridization of homologous single-stranded DNAs. It interacts with LexA causing its activation and leading to its autocatalytic cleavage. This is Protein RecA from Staphylococcus epidermidis (strain ATCC 35984 / DSM 28319 / BCRC 17069 / CCUG 31568 / BM 3577 / RP62A).